A 272-amino-acid polypeptide reads, in one-letter code: Glutamate racemase (272 aa).

Residues 12–13 and 44–45 contribute to the substrate site; these read DS and YG. Catalysis depends on Cys75, which acts as the Proton donor/acceptor. Position 76–77 (76–77) interacts with substrate; that stretch reads NT. Cys185 acts as the Proton donor/acceptor in catalysis. 186-187 serves as a coordination point for substrate; sequence TH.

The protein belongs to the aspartate/glutamate racemases family.

The enzyme catalyses L-glutamate = D-glutamate. The protein operates within cell wall biogenesis; peptidoglycan biosynthesis. In terms of biological role, provides the (R)-glutamate required for cell wall biosynthesis. The protein is Glutamate racemase of Mycobacterium leprae (strain TN).